A 521-amino-acid chain; its full sequence is Glucose-1-phosphate adenylyltransferase large subunit 2, chloroplastic/amyloplastic (521 aa).

The N-terminal 47 residues, 1–47, are a transit peptide targeting the chloroplast; that stretch reads MQFSSVLPLEGKACMSPVRRGSGGYGSERMRINCCSIRRNKALRRMC.

This sequence belongs to the bacterial/plant glucose-1-phosphate adenylyltransferase family. Heterotetramer. In terms of tissue distribution, abundant in the embryo and is also present in the endosperm.

The protein resides in the plastid. Its subcellular location is the chloroplast. It localises to the amyloplast. The catalysed reaction is alpha-D-glucose 1-phosphate + ATP + H(+) = ADP-alpha-D-glucose + diphosphate. The protein operates within glycan biosynthesis; starch biosynthesis. Its activity is regulated as follows. Activated by 3'phosphoglycerate, inhibited by orthophosphate. Allosteric regulation. This protein plays a role in synthesis of starch. It catalyzes the synthesis of the activated glycosyl donor, ADP-glucose from Glc-1-P and ATP. In Zea mays (Maize), this protein is Glucose-1-phosphate adenylyltransferase large subunit 2, chloroplastic/amyloplastic (AGP2).